Here is a 229-residue protein sequence, read N- to C-terminus: UPF0758 protein Fjoh_0413 (229 aa).

The 123-residue stretch at 107-229 folds into the MPN domain; sequence KITSSKDAFT…YYSFVDEGIF (123 aa). 3 residues coordinate Zn(2+): histidine 178, histidine 180, and aspartate 191. Positions 178 to 191 match the JAMM motif motif; sequence HNHPSGELNPSQAD.

This sequence belongs to the UPF0758 family.

This is UPF0758 protein Fjoh_0413 from Flavobacterium johnsoniae (strain ATCC 17061 / DSM 2064 / JCM 8514 / BCRC 14874 / CCUG 350202 / NBRC 14942 / NCIMB 11054 / UW101) (Cytophaga johnsonae).